The primary structure comprises 380 residues: Chaperone protein DnaJ (380 aa).

In terms of domain architecture, J spans 5-70; it reads DYYEVLGVSK…QKRQTYDQYG (66 aa). The CR-type zinc-finger motif lies at 136-214; it reads GKEVEIKIPT…CHGQGRVEKT (79 aa). Zn(2+)-binding residues include Cys-149, Cys-152, Cys-166, Cys-169, Cys-188, Cys-191, Cys-202, and Cys-205. CXXCXGXG motif repeat units follow at residues 149–156, 166–173, 188–195, and 202–209; these read CDPCDGSG, CTTCHGAG, CPTCQGQG, and CDSCHGQG.

Belongs to the DnaJ family. In terms of assembly, homodimer. The cofactor is Zn(2+).

It is found in the cytoplasm. In terms of biological role, participates actively in the response to hyperosmotic and heat shock by preventing the aggregation of stress-denatured proteins and by disaggregating proteins, also in an autonomous, DnaK-independent fashion. Unfolded proteins bind initially to DnaJ; upon interaction with the DnaJ-bound protein, DnaK hydrolyzes its bound ATP, resulting in the formation of a stable complex. GrpE releases ADP from DnaK; ATP binding to DnaK triggers the release of the substrate protein, thus completing the reaction cycle. Several rounds of ATP-dependent interactions between DnaJ, DnaK and GrpE are required for fully efficient folding. Also involved, together with DnaK and GrpE, in the DNA replication of plasmids through activation of initiation proteins. The protein is Chaperone protein DnaJ of Pseudoalteromonas translucida (strain TAC 125).